The following is a 535-amino-acid chain: CTP synthase (535 aa).

An amidoligase domain region spans residues 1-267 (MTKYIFVTGG…DSLVCSHLKL (267 aa)). CTP is bound at residue Ser-13. Ser-13 is a UTP binding site. 14–19 (SLGKGI) contacts ATP. Residue Tyr-54 participates in L-glutamine binding. Position 71 (Asp-71) interacts with ATP. Mg(2+)-binding residues include Asp-71 and Glu-141. CTP is bound by residues 148 to 150 (DIE), 188 to 193 (KTKPTQ), and Lys-224. UTP contacts are provided by residues 188–193 (KTKPTQ) and Lys-224. The Glutamine amidotransferase type-1 domain occupies 292 to 534 (TIALVGKYVE…VHASLKTSEK (243 aa)). Gly-354 is an L-glutamine binding site. Catalysis depends on Cys-381, which acts as the Nucleophile; for glutamine hydrolysis. L-glutamine contacts are provided by residues 382–385 (LGMQ), Glu-405, and Arg-462. Catalysis depends on residues His-507 and Glu-509.

This sequence belongs to the CTP synthase family. In terms of assembly, homotetramer.

The enzyme catalyses UTP + L-glutamine + ATP + H2O = CTP + L-glutamate + ADP + phosphate + 2 H(+). The catalysed reaction is L-glutamine + H2O = L-glutamate + NH4(+). It catalyses the reaction UTP + NH4(+) + ATP = CTP + ADP + phosphate + 2 H(+). It functions in the pathway pyrimidine metabolism; CTP biosynthesis via de novo pathway; CTP from UDP: step 2/2. Its activity is regulated as follows. Allosterically activated by GTP, when glutamine is the substrate; GTP has no effect on the reaction when ammonia is the substrate. The allosteric effector GTP functions by stabilizing the protein conformation that binds the tetrahedral intermediate(s) formed during glutamine hydrolysis. Inhibited by the product CTP, via allosteric rather than competitive inhibition. Catalyzes the ATP-dependent amination of UTP to CTP with either L-glutamine or ammonia as the source of nitrogen. Regulates intracellular CTP levels through interactions with the four ribonucleotide triphosphates. The polypeptide is CTP synthase (Bacillus licheniformis (strain ATCC 14580 / DSM 13 / JCM 2505 / CCUG 7422 / NBRC 12200 / NCIMB 9375 / NCTC 10341 / NRRL NRS-1264 / Gibson 46)).